We begin with the raw amino-acid sequence, 381 residues long: MIDTLRPVPFASEMAISKTVAWLNEQLELGNERLLLMDCRPQELYESSHIESAINVAIPGIMLRRLQKGNLPVRALFTRGEDRDRFTRRCGTDTVVLYDESSSDWNENTGGESVLGLLLKKLKDEGCRAFYLEGGFSKFQAEFSLHCETNLDGSCSSSSPPLPVLGLGGLRISSDSSSDIESDLDRDPNSATDSDGSPLSNSQPSFPVEILPFLYLGCAKDSTNLDVLEEFGIKYILNVTPNLPNLFENAGEFKYKQIPISDHWSQNLSQFFPEAISFIDEARGKNCGVLVHCLAGISRSVTVTVAYLMQKLNLSMNDAYDIVKMKKSNISPNFNFMGQLLDFERTLGLSSPCDNRVPAQQLYFTTPSNQNVYQVDSLQST.

The Rhodanese domain occupies Gly30 to Glu148. The tract at residues Ser176–Gln203 is disordered. The span at Asn189–Gln203 shows a compositional bias: polar residues. In terms of domain architecture, Tyrosine-protein phosphatase spans Phe206–Leu349. Cys293 acts as the Phosphocysteine intermediate in catalysis.

It belongs to the protein-tyrosine phosphatase family. Non-receptor class dual specificity subfamily. In terms of assembly, interacts with MAPK1/ERK2. In terms of processing, ubiquitinated by the SCF(FBXO31) complex, leading to its proteasomal degradation. Expressed in keratinocytes (at protein level).

It is found in the cytoplasm. The enzyme catalyses O-phospho-L-tyrosyl-[protein] + H2O = L-tyrosyl-[protein] + phosphate. The catalysed reaction is O-phospho-L-seryl-[protein] + H2O = L-seryl-[protein] + phosphate. It carries out the reaction O-phospho-L-threonyl-[protein] + H2O = L-threonyl-[protein] + phosphate. Functionally, dual specificity protein phosphatase, which mediates dephosphorylation and inactivation of MAP kinases. Has a specificity for the ERK family. Plays an important role in alleviating chronic postoperative pain. Necessary for the normal dephosphorylation of the long-lasting phosphorylated forms of spinal MAPK1/3 and MAP kinase p38 induced by peripheral surgery, which drives the resolution of acute postoperative allodynia. Also important for dephosphorylation of MAPK1/3 in local wound tissue, which further contributes to resolution of acute pain. Promotes cell differentiation by regulating MAPK1/MAPK3 activity and regulating the expression of AP1 transcription factors. In Homo sapiens (Human), this protein is Dual specificity protein phosphatase 6 (DUSP6).